A 581-amino-acid chain; its full sequence is 2-succinyl-5-enolpyruvyl-6-hydroxy-3-cyclohexene-1-carboxylate synthase (581 aa).

The protein belongs to the TPP enzyme family. MenD subfamily. Homodimer. It depends on Mg(2+) as a cofactor. Mn(2+) serves as cofactor. Requires thiamine diphosphate as cofactor.

The enzyme catalyses isochorismate + 2-oxoglutarate + H(+) = 5-enolpyruvoyl-6-hydroxy-2-succinyl-cyclohex-3-ene-1-carboxylate + CO2. Its pathway is quinol/quinone metabolism; 1,4-dihydroxy-2-naphthoate biosynthesis; 1,4-dihydroxy-2-naphthoate from chorismate: step 2/7. The protein operates within cofactor biosynthesis; phylloquinone biosynthesis. In terms of biological role, catalyzes the thiamine diphosphate-dependent decarboxylation of 2-oxoglutarate and the subsequent addition of the resulting succinic semialdehyde-thiamine pyrophosphate anion to isochorismate to yield 2-succinyl-5-enolpyruvyl-6-hydroxy-3-cyclohexene-1-carboxylate (SEPHCHC). The sequence is that of 2-succinyl-5-enolpyruvyl-6-hydroxy-3-cyclohexene-1-carboxylate synthase from Gloeothece citriformis (strain PCC 7424) (Cyanothece sp. (strain PCC 7424)).